We begin with the raw amino-acid sequence, 55 residues long: Large ribosomal subunit protein bL33 (55 aa).

It belongs to the bacterial ribosomal protein bL33 family.

The protein is Large ribosomal subunit protein bL33 of Yersinia enterocolitica serotype O:8 / biotype 1B (strain NCTC 13174 / 8081).